The following is a 262-amino-acid chain: Polyamine aminopropyltransferase (262 aa).

One can recognise a PABS domain in the interval 1-249 (MWITQEITPY…DIHRAAFALP (249 aa)). An S-methyl-5'-thioadenosine-binding site is contributed by Asn29. Asp83 contacts spermidine. The active-site Proton acceptor is Asp155.

The protein belongs to the spermidine/spermine synthase family. As to quaternary structure, homodimer or homotetramer.

The protein resides in the cytoplasm. The catalysed reaction is S-adenosyl 3-(methylsulfanyl)propylamine + putrescine = S-methyl-5'-thioadenosine + spermidine + H(+). It participates in amine and polyamine biosynthesis; spermidine biosynthesis; spermidine from putrescine: step 1/1. Its function is as follows. Catalyzes the irreversible transfer of a propylamine group from the amino donor S-adenosylmethioninamine (decarboxy-AdoMet) to putrescine (1,4-diaminobutane) to yield spermidine. The polypeptide is Polyamine aminopropyltransferase (Helicobacter acinonychis (strain Sheeba)).